We begin with the raw amino-acid sequence, 217 residues long: MOB kinase activator 3A (217 aa).

Zn(2+) contacts are provided by Cys83, Cys88, His165, and His170.

The protein belongs to the MOB1/phocein family.

Its function is as follows. May regulate the activity of kinases. The chain is MOB kinase activator 3A (MOB3A) from Bos taurus (Bovine).